We begin with the raw amino-acid sequence, 90 residues long: YcgL domain-containing protein YE2368 (90 aa).

A YcgL domain is found at M1–L85.

This Yersinia enterocolitica serotype O:8 / biotype 1B (strain NCTC 13174 / 8081) protein is YcgL domain-containing protein YE2368.